Consider the following 127-residue polypeptide: Small ribosomal subunit protein uS11 (127 aa).

It belongs to the universal ribosomal protein uS11 family. Part of the 30S ribosomal subunit. Interacts with proteins S7 and S18. Binds to IF-3.

Located on the platform of the 30S subunit, it bridges several disparate RNA helices of the 16S rRNA. Forms part of the Shine-Dalgarno cleft in the 70S ribosome. This Streptococcus pyogenes serotype M1 protein is Small ribosomal subunit protein uS11.